Reading from the N-terminus, the 393-residue chain is NAD(P)H-quinone oxidoreductase subunit H, chloroplastic (393 aa).

The protein belongs to the complex I 49 kDa subunit family. In terms of assembly, NDH is composed of at least 16 different subunits, 5 of which are encoded in the nucleus.

It localises to the plastid. It is found in the chloroplast thylakoid membrane. It catalyses the reaction a plastoquinone + NADH + (n+1) H(+)(in) = a plastoquinol + NAD(+) + n H(+)(out). The enzyme catalyses a plastoquinone + NADPH + (n+1) H(+)(in) = a plastoquinol + NADP(+) + n H(+)(out). Its function is as follows. NDH shuttles electrons from NAD(P)H:plastoquinone, via FMN and iron-sulfur (Fe-S) centers, to quinones in the photosynthetic chain and possibly in a chloroplast respiratory chain. The immediate electron acceptor for the enzyme in this species is believed to be plastoquinone. Couples the redox reaction to proton translocation, and thus conserves the redox energy in a proton gradient. This Solanum bulbocastanum (Wild potato) protein is NAD(P)H-quinone oxidoreductase subunit H, chloroplastic.